A 649-amino-acid polypeptide reads, in one-letter code: Drebrin (649 aa).

A2 bears the N-acetylalanine mark. The ADF-H domain maps to G3–S134. Residues S141 and S142 each carry the phosphoserine modification. 2 stretches are compositionally biased toward basic and acidic residues: residues Q208 to R236 and D288 to E298. Disordered regions lie at residues Q208–D420, D477–T502, and E538–V620. Residues T331 and T335 each carry the phosphothreonine modification. A compositionally biased stretch (polar residues) spans P334–V348. 3 positions are modified to phosphoserine: S337, S339, and S345. At T346 the chain carries Phosphothreonine. The span at Q363 to A374 shows a compositional bias: pro residues. S416 carries the phosphoserine modification. T497 is modified (phosphothreonine). Over residues N582 to S594 the composition is skewed to polar residues. S601 carries the post-translational modification Phosphoserine.

Interacts with RUFY3. Interacts with CXCR4; this interaction is enhanced by antigenic stimulation. Interacts (via ADF-H domain) with ZMYND8 (via N-terminus); the interaction leads to sequestering of ZMYND8 in the cytoplasm. Expressed in the brain, with expression in the molecular layer of the dentate gyrus, stratum pyramidale, and stratum radiatum of the hippocampus (at protein level). Also expressed in the terminal varicosities distributed along dendritic trees of pyramidal cells in CA4 and CA3 of the hippocampus (at protein level). Expressed in pyramidal cells in CA2, CA1 and the subiculum of the hippocampus (at protein level). Expressed in peripheral blood lymphocytes, including T-cells (at protein level). Expressed in the brain. Expressed in the heart, placenta, lung, skeletal muscle, kidney, pancreas, skin fibroblasts, gingival fibroblasts and bone-derived cells.

It is found in the cytoplasm. The protein resides in the cell projection. Its subcellular location is the dendrite. It localises to the cell cortex. The protein localises to the cell junction. It is found in the growth cone. In terms of biological role, actin cytoskeleton-organizing protein that plays a role in the formation of cell projections. Required for actin polymerization at immunological synapses (IS) and for the recruitment of the chemokine receptor CXCR4 to IS. Plays a role in dendritic spine morphogenesis and organization, including the localization of the dopamine receptor DRD1 to the dendritic spines. Involved in memory-related synaptic plasticity in the hippocampus. The protein is Drebrin (DBN1) of Homo sapiens (Human).